Consider the following 370-residue polypeptide: Protein FAM110B (370 aa).

2 disordered regions span residues 127–151 and 237–256; these read SSEG…RSEA and KSPE…RPSL. 2 positions are modified to phosphoserine: S238 and S301. The segment at 317–337 is disordered; sequence DCEQSQDSNSDLRNDDSANDR. Basic and acidic residues predominate over residues 326 to 335; sequence SDLRNDDSAN.

This sequence belongs to the FAM110 family. Detected in thyroid, spleen and testis, and at lower levels in stomach, spinal cord, lymph node, trachea, adrenal gland, prostate, ovary and intestine.

The protein localises to the cytoplasm. It is found in the cytoskeleton. Its subcellular location is the microtubule organizing center. It localises to the centrosome. May be involved in tumor progression. The sequence is that of Protein FAM110B (FAM110B) from Homo sapiens (Human).